The chain runs to 46 residues: Protein PsbN (46 aa).

A helical transmembrane segment spans residues 10-30 (VSIAVLTALLGLTGFGIYTAF).

Belongs to the PsbN family.

It is found in the cellular thylakoid membrane. Functionally, may play a role in photosystem I and II biogenesis. This chain is Protein PsbN, found in Synechococcus sp. (strain RCC307).